Reading from the N-terminus, the 864-residue chain is N-alpha-acetyltransferase 16, NatA auxiliary subunit (864 aa).

TPR repeat units follow at residues 46–79, 80–113, 148–184, 224–257, 374–407, 408–441, and 485–514; these read GETL…DVRS, HVCW…DKDN, RASW…PPNK, LLVE…NAEN, IWVQ…TPTL, IELF…DTAD, and MWFE…VERH. The interval 594 to 646 is disordered; sequence KMLSKQRRAQKKAKVEEERKHTERERQQKNQKKKREEEEEVTSGHKEELIPEK. Positions 595–605 are enriched in basic residues; that stretch reads MLSKQRRAQKK. Basic and acidic residues-rich tracts occupy residues 606 to 621 and 635 to 646; these read AKVE…ERQQ and TSGHKEELIPEK.

As to quaternary structure, component of the N-terminal acetyltransferase A (NatA) complex composed of NAA10 and NAA16. In terms of tissue distribution, highest levels in the kidney and testes. Moderate expression in the liver, thymus and skin.

Its function is as follows. Auxillary subunit of the N-terminal acetyltransferase A (NatA) complex which displays alpha (N-terminal) acetyltransferase activity. The sequence is that of N-alpha-acetyltransferase 16, NatA auxiliary subunit (Naa16) from Mus musculus (Mouse).